Reading from the N-terminus, the 245-residue chain is Adenosylcobinamide-GDP ribazoletransferase (245 aa).

The next 5 membrane-spanning stretches (helical) occupy residues 35 to 55 (WFPL…ALGL), 108 to 128 (IGAF…IGAH), 137 to 157 (GVLI…AALV), 176 to 196 (IAIG…TPAI), and 197 to 217 (TTVT…HLAR).

Belongs to the CobS family. The cofactor is Mg(2+).

Its subcellular location is the cell inner membrane. It carries out the reaction alpha-ribazole + adenosylcob(III)inamide-GDP = adenosylcob(III)alamin + GMP + H(+). The enzyme catalyses alpha-ribazole 5'-phosphate + adenosylcob(III)inamide-GDP = adenosylcob(III)alamin 5'-phosphate + GMP + H(+). The protein operates within cofactor biosynthesis; adenosylcobalamin biosynthesis; adenosylcobalamin from cob(II)yrinate a,c-diamide: step 7/7. In terms of biological role, joins adenosylcobinamide-GDP and alpha-ribazole to generate adenosylcobalamin (Ado-cobalamin). Also synthesizes adenosylcobalamin 5'-phosphate from adenosylcobinamide-GDP and alpha-ribazole 5'-phosphate. This Nitratidesulfovibrio vulgaris (strain ATCC 29579 / DSM 644 / CCUG 34227 / NCIMB 8303 / VKM B-1760 / Hildenborough) (Desulfovibrio vulgaris) protein is Adenosylcobinamide-GDP ribazoletransferase.